The primary structure comprises 674 residues: DNA mismatch repair protein MutL (674 aa).

Belongs to the DNA mismatch repair MutL/HexB family.

Functionally, this protein is involved in the repair of mismatches in DNA. It is required for dam-dependent methyl-directed DNA mismatch repair. May act as a 'molecular matchmaker', a protein that promotes the formation of a stable complex between two or more DNA-binding proteins in an ATP-dependent manner without itself being part of a final effector complex. The protein is DNA mismatch repair protein MutL of Clostridium perfringens (strain ATCC 13124 / DSM 756 / JCM 1290 / NCIMB 6125 / NCTC 8237 / Type A).